Reading from the N-terminus, the 134-residue chain is Zinc finger protein 593 (134 aa).

Positions 1 to 25 (MGRSRRTGAHRAHSLARQMKAKRRR) are enriched in basic residues. Disordered regions lie at residues 1 to 57 (MGRS…DLPG) and 82 to 134 (SKDH…DTST). Residues 26–36 (PDLDEIHRELR) are compositionally biased toward basic and acidic residues. Residues 61–85 (HRCLACARYFIDSTNLKTHFRSKDH) form a C2H2-type zinc finger.

It belongs to the ZNF593/BUD20 C2H2-type zinc-finger protein family. Associates with pre-60S ribosomal particles. As to expression, ubiquitous. Detected in spleen, prostate, testis, small intestine, colon and to a minor level in thymus and peripheral blood leukocytes.

Its subcellular location is the nucleus. It localises to the nucleolus. The protein resides in the cytoplasm. Functionally, involved in pre-60S ribosomal particles maturation by promoting the nuclear export of the 60S ribosome. Negatively modulates the DNA binding activity of Oct-2 and therefore its transcriptional regulatory activity. The chain is Zinc finger protein 593 (ZNF593) from Homo sapiens (Human).